The primary structure comprises 122 residues: Large ribosomal subunit protein uL14 (122 aa).

It belongs to the universal ribosomal protein uL14 family. In terms of assembly, part of the 50S ribosomal subunit. Forms a cluster with proteins L3 and L19. In the 70S ribosome, L14 and L19 interact and together make contacts with the 16S rRNA in bridges B5 and B8.

Binds to 23S rRNA. Forms part of two intersubunit bridges in the 70S ribosome. In Bordetella avium (strain 197N), this protein is Large ribosomal subunit protein uL14.